We begin with the raw amino-acid sequence, 61 residues long: Probable tautomerase SMU_1087 (61 aa).

The Proton acceptor; via imino nitrogen role is filled by Pro-2.

This sequence belongs to the 4-oxalocrotonate tautomerase family.

In Streptococcus mutans serotype c (strain ATCC 700610 / UA159), this protein is Probable tautomerase SMU_1087.